The chain runs to 295 residues: Protein gurken (295 aa).

The N-terminal stretch at 1 to 26 (MMQIPFTRIFKVIFVLSTIVAVTDCC) is a signal peptide. Topologically, residues 27–247 (SSRILLLREH…TAQRKVRMAH (221 aa)) are extracellular. Disordered stretches follow at residues 78 to 111 (EASAQEEADQLHPDTDPNPDSGGQLPNADDSIAA) and 124 to 175 (TDTW…NDKE). The span at 124 to 139 (TDTWLASESSTPITDS) shows a compositional bias: polar residues. Composition is skewed to low complexity over residues 140-152 (ETVTTPETVTHTG) and 159-171 (SSSSTPDSTTPSP). Residues 179–224 (QMLPCSEAYNTSFCLNGGHCFQHPMVNNTVFHSCLCVNDYDGERCA) enclose the EGF-like domain. Intrachain disulfides connect Cys183–Cys198, Cys192–Cys212, and Cys214–Cys223. Asn188 and Asn205 each carry an N-linked (GlcNAc...) asparagine glycan. The interaction with cni stretch occupies residues 215 to 245 (VNDYDGERCAYKSWNGDYIYSPPTAQRKVRM). The helical transmembrane segment at 248–268 (IVFSFPVLLMLSSLYVLFAAV) threads the bilayer. Over 269-295 (FMLRNVPDYRRKQQQLHLHKQRFFVRC) the chain is Cytoplasmic.

Interacts with cni. In terms of tissue distribution, expressed in nurse cells and oocyte up to oogenesis stage 7. Specifically accumulates in dorsal anterior corner of the oocyte during stages 9/10, at later stages expression is seen as an anterior ring. In stage 10 ovaries, it is concentrated between the oocyte nucleus and the adjacent oolemma. During vitellogenesis stage it can be detected at the oocyte surface, especially on the microvilli. It is also found at the microvilli covering the apical surface of the follicular epithelium and within follicle cells.

It is found in the cell membrane. Critical for defining the anterior-posterior and dorsal-ventral axes of the egg. May signal directly to dorsal follicle cells through the receptor torpedo (top). During oogenesis this signaling pathway instructs follicle cells to follow a dorsal pathway of development rather than the default ventral pathway. In Drosophila melanogaster (Fruit fly), this protein is Protein gurken (grk).